The following is a 430-amino-acid chain: MIDSLDLVIDTIVAREVLDSRGNPTVEAEVLLEGGAMGRAIVPSGASTGAHEAHELRDGGKRYMGKGVSQAVTHIEERIAPALCGLSALDQAAVDAAMLELDGSDNKSNLGANSILAVSMATARAAANGLGLPLYRYLGGPLANLLPVPLMNVINGGAHAANSLDFQEFMLVPHGAPSFREALRMGTEVFHTLKDLLNAKGMSTSVGDEGGFAPNLGNVEAGEILVEAIQKAGYKPGEQISLALDVASTEFFENGRYAFDGGSYTSAEMVGQLEQLVNQFPIVSIEDGLAEDDWEGWKLLTERLGSKVQLVGDDLFVTNTKRLQQGIDNNTANSILIKVNQIGSLTETLQAIDLAGRSGYTSVISHRSGETEDTTIADLSVATRAGQIKTGSLSRSERVAKYNQLLRIEDELGSQAVYAGAVGQGPRGKA.

A (2R)-2-phosphoglycerate-binding site is contributed by Q167. Residue E209 is the Proton donor of the active site. D245, E286, and D313 together coordinate Mg(2+). 4 residues coordinate (2R)-2-phosphoglycerate: K338, R367, S368, and K389. Residue K338 is the Proton acceptor of the active site.

This sequence belongs to the enolase family. The cofactor is Mg(2+).

It is found in the cytoplasm. The protein resides in the secreted. It localises to the cell surface. It catalyses the reaction (2R)-2-phosphoglycerate = phosphoenolpyruvate + H2O. It functions in the pathway carbohydrate degradation; glycolysis; pyruvate from D-glyceraldehyde 3-phosphate: step 4/5. In terms of biological role, catalyzes the reversible conversion of 2-phosphoglycerate (2-PG) into phosphoenolpyruvate (PEP). It is essential for the degradation of carbohydrates via glycolysis. The polypeptide is Enolase (Synechococcus sp. (strain CC9902)).